Reading from the N-terminus, the 301-residue chain is Ribonuclease Z (301 aa).

Zn(2+) is bound by residues His-60, His-62, Asp-64, His-65, His-137, Asp-207, and His-265. Asp-64 serves as the catalytic Proton acceptor.

The protein belongs to the RNase Z family. As to quaternary structure, homodimer. The cofactor is Zn(2+).

It carries out the reaction Endonucleolytic cleavage of RNA, removing extra 3' nucleotides from tRNA precursor, generating 3' termini of tRNAs. A 3'-hydroxy group is left at the tRNA terminus and a 5'-phosphoryl group is left at the trailer molecule.. In terms of biological role, zinc phosphodiesterase, which displays some tRNA 3'-processing endonuclease activity. Probably involved in tRNA maturation, by removing a 3'-trailer from precursor tRNA. The sequence is that of Ribonuclease Z from Exiguobacterium sibiricum (strain DSM 17290 / CCUG 55495 / CIP 109462 / JCM 13490 / 255-15).